A 192-amino-acid polypeptide reads, in one-letter code: MELLGQKVKEDGVVIDERILKVDGFLNHQIDAKLMDEVGRTFYEQFKDKGITKILTIEASGIAPAIMAALHFDVPCLFAKKAKPSTLTDGYYETSIHSFTKNKTSTVIVSKEFLSEEDTVLIIDDFLANGDASLGLYDIAQQANAKTAGIGIVVEKSFQNGHQRLEEAGLTVSSLCKVASLEGNKVTLVGEE.

2 residues coordinate xanthine: Leu20 and Asn27. 5-phospho-alpha-D-ribose 1-diphosphate is bound at residue 128–132; it reads ANGDA. Position 156 (Lys156) interacts with xanthine.

It belongs to the purine/pyrimidine phosphoribosyltransferase family. Xpt subfamily. In terms of assembly, homodimer.

The protein localises to the cytoplasm. The enzyme catalyses XMP + diphosphate = xanthine + 5-phospho-alpha-D-ribose 1-diphosphate. It participates in purine metabolism; XMP biosynthesis via salvage pathway; XMP from xanthine: step 1/1. Converts the preformed base xanthine, a product of nucleic acid breakdown, to xanthosine 5'-monophosphate (XMP), so it can be reused for RNA or DNA synthesis. This chain is Xanthine phosphoribosyltransferase, found in Staphylococcus aureus (strain MRSA252).